A 543-amino-acid chain; its full sequence is Cytochrome P450 1B1 (543 aa).

Cys470 is a binding site for heme.

Belongs to the cytochrome P450 family. Heme serves as cofactor. Constitutively expressed in retinal and kidney pericytes cells. Expressed in retinal endothelial cells (at protein level). Expressed in cardiac, pulmonary and aortic endothelial cells. Constitutively expressed in trabecular meshwork of the eye (at protein level).

Its subcellular location is the endoplasmic reticulum membrane. It is found in the microsome membrane. The protein resides in the mitochondrion. It catalyses the reaction an organic molecule + reduced [NADPH--hemoprotein reductase] + O2 = an alcohol + oxidized [NADPH--hemoprotein reductase] + H2O + H(+). It carries out the reaction 17beta-estradiol + reduced [NADPH--hemoprotein reductase] + O2 = 2-hydroxy-17beta-estradiol + oxidized [NADPH--hemoprotein reductase] + H2O + H(+). The catalysed reaction is 17beta-estradiol + reduced [NADPH--hemoprotein reductase] + O2 = 4-hydroxy-17beta-estradiol + oxidized [NADPH--hemoprotein reductase] + H2O + H(+). The enzyme catalyses estrone + reduced [NADPH--hemoprotein reductase] + O2 = 2-hydroxyestrone + oxidized [NADPH--hemoprotein reductase] + H2O + H(+). It catalyses the reaction estrone + reduced [NADPH--hemoprotein reductase] + O2 = 4-hydroxyestrone + oxidized [NADPH--hemoprotein reductase] + H2O + H(+). It carries out the reaction testosterone + reduced [NADPH--hemoprotein reductase] + O2 = 6beta,17beta-dihydroxyandrost-4-en-3-one + oxidized [NADPH--hemoprotein reductase] + H2O + H(+). The catalysed reaction is progesterone + reduced [NADPH--hemoprotein reductase] + O2 = 6beta-hydroxyprogesterone + oxidized [NADPH--hemoprotein reductase] + H2O + H(+). The enzyme catalyses progesterone + reduced [NADPH--hemoprotein reductase] + O2 = 16alpha-hydroxyprogesterone + oxidized [NADPH--hemoprotein reductase] + H2O + H(+). It catalyses the reaction all-trans-retinol + reduced [NADPH--hemoprotein reductase] + O2 = all-trans-retinal + oxidized [NADPH--hemoprotein reductase] + 2 H2O + H(+). It carries out the reaction all-trans-retinal + reduced [NADPH--hemoprotein reductase] + O2 = all-trans-retinoate + oxidized [NADPH--hemoprotein reductase] + H2O + 2 H(+). The catalysed reaction is (5Z,8Z,11Z,14Z)-eicosatetraenoate + reduced [NADPH--hemoprotein reductase] + O2 = (8R,9S)-epoxy-(5Z,11Z,14Z)-eicosatrienoate + oxidized [NADPH--hemoprotein reductase] + H2O + H(+). The enzyme catalyses (5Z,8Z,11Z,14Z)-eicosatetraenoate + reduced [NADPH--hemoprotein reductase] + O2 = (11R,12S)-epoxy-(5Z,8Z,14Z)-eicosatrienoate + oxidized [NADPH--hemoprotein reductase] + H2O + H(+). It catalyses the reaction (5Z,8Z,11Z,14Z)-eicosatetraenoate + reduced [NADPH--hemoprotein reductase] + O2 = (11S,12R)-epoxy-(5Z,8Z,14Z)-eicosatrienoate + oxidized [NADPH--hemoprotein reductase] + H2O + H(+). It carries out the reaction (5Z,8Z,11Z,14Z)-eicosatetraenoate + reduced [NADPH--hemoprotein reductase] + O2 = (14R,15S)-epoxy-(5Z,8Z,11Z)-eicosatrienoate + oxidized [NADPH--hemoprotein reductase] + H2O + H(+). The catalysed reaction is (5S)-hydroperoxy-(6E,8Z,11Z,14Z)-eicosatetraenoate = 5-oxo-(6E,8Z,11Z,14Z)-eicosatetraenoate + H2O. The enzyme catalyses (12S)-hydroperoxy-(5Z,8Z,10E,14Z)-eicosatetraenoate = 12-oxo-(5Z,8Z,10E,14Z)-eicosatetraenoate + H2O. It catalyses the reaction (13S)-hydroperoxy-(9Z,11E)-octadecadienoate = 13-oxo-(9Z,11E)-octadecadienoate + H2O. It carries out the reaction (15S)-hydroperoxy-(5Z,8Z,11Z,13E)-eicosatetraenoate = 15-oxo-(5Z,8Z,11Z,13E)-eicosatetraenoate + H2O. Its pathway is steroid hormone biosynthesis. It functions in the pathway cofactor metabolism; retinol metabolism. It participates in lipid metabolism; arachidonate metabolism. Its activity is regulated as follows. Enzyme activity is increased by cytochrome b5. Enzyme activity is increased by liposomes containing anionic phospholipids, phosphatidic acid and cardiolipin. Inhibited by naringenin with an IC(50) of 5 uM. A cytochrome P450 monooxygenase involved in the metabolism of various endogenous substrates, including fatty acids, steroid hormones and vitamins. Mechanistically, uses molecular oxygen inserting one oxygen atom into a substrate, and reducing the second into a water molecule, with two electrons provided by NADPH via cytochrome P450 reductase (NADPH--hemoprotein reductase). Exhibits catalytic activity for the formation of hydroxyestrogens from 17beta-estradiol (E2), namely 2- and 4-hydroxy E2. Metabolizes testosterone and progesterone to B or D ring hydroxylated metabolites. May act as a major enzyme for all-trans retinoic acid biosynthesis in extrahepatic tissues. Catalyzes two successive oxidative transformation of all-trans retinol to all-trans retinal and then to the active form all-trans retinoic acid. Catalyzes the epoxidation of double bonds of certain PUFA. Converts arachidonic acid toward epoxyeicosatrienoic acid (EpETrE) regioisomers, 8,9-, 11,12-, and 14,15- EpETrE, that function as lipid mediators in the vascular system. Additionally, displays dehydratase activity toward oxygenated eicosanoids hydroperoxyeicosatetraenoates (HpETEs). This activity is independent of cytochrome P450 reductase, NADPH, and O2. Also involved in the oxidative metabolism of xenobiotics, particularly converting polycyclic aromatic hydrocarbons and heterocyclic aryl amines procarcinogens to DNA-damaging products. Plays an important role in retinal vascular development. Under ambient/hyperoxic O2 conditions, promotes angiogenesis and capillary morphogenesis of retinal endothelial cells and pericytes, likely by metabolizing the oxygenated products symptomatic of oxidative stress. Also, contributes to oxidative homeostasis and ultrastructural organization and function of trabecular meshwork tissue through modulation of POSTN expression. This Mus musculus (Mouse) protein is Cytochrome P450 1B1.